The chain runs to 346 residues: Bifunctional phosphatase IMPL2, chloroplastic (346 aa).

The N-terminal 61 residues, 1–61 (MLAQSHFFSK…VSRRRFCLTM (61 aa)), are a transit peptide targeting the chloroplast. Glu-147, Asp-165, and Asp-168 together coordinate Mg(2+). Glu-147 is a binding site for substrate. Residues 167–170 (IDGT), 263–265 (GCD), Glu-282, and Asp-289 contribute to the substrate site. Residue Asp-289 coordinates Mg(2+).

This sequence belongs to the inositol monophosphatase superfamily. The cofactor is Mg(2+). Ubiquitous. High expression in roots. Expressed in pistil and seed endosperm.

It localises to the plastid. The protein localises to the chloroplast. It carries out the reaction a myo-inositol phosphate + H2O = myo-inositol + phosphate. It catalyses the reaction L-histidinol phosphate + H2O = L-histidinol + phosphate. The catalysed reaction is beta-L-galactose 1-phosphate + H2O = L-galactose + phosphate. It functions in the pathway amino-acid biosynthesis; L-histidine biosynthesis; L-histidine from 5-phospho-alpha-D-ribose 1-diphosphate: step 8/9. The protein operates within polyol metabolism; myo-inositol biosynthesis; myo-inositol from D-glucose 6-phosphate: step 2/2. Its function is as follows. Phosphatase required for histidine production. Also acts on L-galactose 1-phosphate (L-Gal 1-P), D-myoinositol 3-phosphate (D-Ins 3-P) and D-myoinositol 1-phosphate (D-Ins 1-P). The sequence is that of Bifunctional phosphatase IMPL2, chloroplastic (HISN7) from Arabidopsis thaliana (Mouse-ear cress).